Here is a 279-residue protein sequence, read N- to C-terminus: Urease accessory protein UreD (279 aa).

Belongs to the UreD family. UreD, UreF and UreG form a complex that acts as a GTP-hydrolysis-dependent molecular chaperone, activating the urease apoprotein by helping to assemble the nickel containing metallocenter of UreC. The UreE protein probably delivers the nickel.

It is found in the cytoplasm. In terms of biological role, required for maturation of urease via the functional incorporation of the urease nickel metallocenter. The chain is Urease accessory protein UreD from Paracoccus denitrificans (strain Pd 1222).